We begin with the raw amino-acid sequence, 233 residues long: 2-C-methyl-D-erythritol 4-phosphate cytidylyltransferase (233 aa).

This sequence belongs to the IspD/TarI cytidylyltransferase family. IspD subfamily.

It carries out the reaction 2-C-methyl-D-erythritol 4-phosphate + CTP + H(+) = 4-CDP-2-C-methyl-D-erythritol + diphosphate. It functions in the pathway isoprenoid biosynthesis; isopentenyl diphosphate biosynthesis via DXP pathway; isopentenyl diphosphate from 1-deoxy-D-xylulose 5-phosphate: step 2/6. In terms of biological role, catalyzes the formation of 4-diphosphocytidyl-2-C-methyl-D-erythritol from CTP and 2-C-methyl-D-erythritol 4-phosphate (MEP). The chain is 2-C-methyl-D-erythritol 4-phosphate cytidylyltransferase from Gloeobacter violaceus (strain ATCC 29082 / PCC 7421).